Here is a 331-residue protein sequence, read N- to C-terminus: Lipoyl synthase (331 aa).

Positions 57, 62, 68, 83, 87, 90, and 294 each coordinate [4Fe-4S] cluster. The 215-residue stretch at 69-283 (WEDREATFLI…KAEAEAIGFL (215 aa)) folds into the Radical SAM core domain.

It belongs to the radical SAM superfamily. Lipoyl synthase family. It depends on [4Fe-4S] cluster as a cofactor.

The protein localises to the cytoplasm. It carries out the reaction [[Fe-S] cluster scaffold protein carrying a second [4Fe-4S](2+) cluster] + N(6)-octanoyl-L-lysyl-[protein] + 2 oxidized [2Fe-2S]-[ferredoxin] + 2 S-adenosyl-L-methionine + 4 H(+) = [[Fe-S] cluster scaffold protein] + N(6)-[(R)-dihydrolipoyl]-L-lysyl-[protein] + 4 Fe(3+) + 2 hydrogen sulfide + 2 5'-deoxyadenosine + 2 L-methionine + 2 reduced [2Fe-2S]-[ferredoxin]. The protein operates within protein modification; protein lipoylation via endogenous pathway; protein N(6)-(lipoyl)lysine from octanoyl-[acyl-carrier-protein]: step 2/2. Its function is as follows. Catalyzes the radical-mediated insertion of two sulfur atoms into the C-6 and C-8 positions of the octanoyl moiety bound to the lipoyl domains of lipoate-dependent enzymes, thereby converting the octanoylated domains into lipoylated derivatives. The sequence is that of Lipoyl synthase from Clavibacter michiganensis subsp. michiganensis (strain NCPPB 382).